The chain runs to 392 residues: N-acetylneuraminate epimerase (392 aa).

A signal peptide spans 1–35 (MTQLYPQYKKQLTTKIVLFSALSLLMMASLPNTYA). Kelch repeat units lie at residues 56–100 (SLYV…VVLA), 102–155 (KLYV…TTLD), 157–192 (SQAVLLGGVNKAIFDGYFTDLASAGSDEVRKSAVIN), 193–238 (AYFN…SRMD), 241–290 (LILI…LAGA), 312–361 (KQFN…QGPD), and 363–392 (VILIGGETTGGTATSAVTQLSWQGGKLHIE). Glu247 serves as the catalytic Proton acceptor.

This sequence belongs to the NanM family. Homodimer.

The protein resides in the periplasm. The enzyme catalyses N-acetyl-alpha-neuraminate = N-acetyl-beta-neuraminate. Functionally, converts alpha-N-acetylneuranimic acid (Neu5Ac) to the beta-anomer, accelerating the equilibrium between the alpha- and beta-anomers. Probably facilitates sialidase-negative bacteria to compete successfully for limited amounts of extracellular Neu5Ac, which is likely taken up in the beta-anomer. In addition, the rapid removal of sialic acid from solution might be advantageous to the bacterium to damp down host responses. The sequence is that of N-acetylneuraminate epimerase from Yersinia pseudotuberculosis serotype O:1b (strain IP 31758).